A 989-amino-acid chain; its full sequence is Presequence protease, mitochondrial (989 aa).

The N-terminal 16 residues, 1–16, are a transit peptide targeting the mitochondrion; sequence MLRFQRFASSYAQAQA. Zn(2+) is bound at residue His84. Glu87 acts as the Proton acceptor in catalysis. His88 contacts Zn(2+). Glu160 is a catalytic residue. Glu185 contacts Zn(2+). Phosphoserine is present on Ser920. 972–979 contributes to the ATP binding site; sequence GPGIEGKT.

It belongs to the peptidase M16 family. PreP subfamily. Monomer and homodimer; homodimerization is induced by binding of the substrate. Requires Zn(2+) as cofactor.

Its subcellular location is the mitochondrion intermembrane space. The protein localises to the mitochondrion matrix. Its activity is regulated as follows. Activated by nucleotides, including ATP, GTP, CTP, UTP, and ADP. Activated by copper, manganese, calcium and magnesium ions; copper and manganese restore activity following inactivation by EDTA (ethylenediaminetetraacetic acid). Inhibited by metal chelators including EDTA, EGTA (ethylene glycol bis(2-aminoethyl)tetraacetic acid), and 1,10-phenanthroline. Inhibited by copper, zinc, and iron ions. Also inhibited by dithiothreitol p-mercuribenzenesulfonic acid, N-ethylmaleimide, protoporphyrin, hemin, protamine and triarginine. Degrades mitochondrial transit peptides after their cleavage in the intermembrane space or in the matrix, and presequence peptides; clearance of these peptides is required to keep the presequence processing machinery running. Preferentially cleaves the N-terminal side of paired basic amino acid residues. Also degrades other unstructured peptides. May function as an ATP-dependent peptidase as opposed to a metalloendopeptidase. In Saccharomyces cerevisiae (strain ATCC 204508 / S288c) (Baker's yeast), this protein is Presequence protease, mitochondrial.